Consider the following 249-residue polypeptide: dTDP-4-amino-2,3,4,6-tetradeoxy-D-glucose N,N-dimethyltransferase (249 aa).

Substrate is bound at residue Arg30. S-adenosyl-L-methionine is bound by residues Ala59, Glu80, and 102–103; that span reads DI. Residues Thr165, 178-182, and Arg241 each bind substrate; that span reads RLSHS.

This sequence belongs to the methyltransferase TylM1/DesVI family. As to quaternary structure, homodimer. Mg(2+) is required as a cofactor.

It catalyses the reaction dTDP-4-amino-2,3,4,6-tetradeoxy-alpha-D-erythro-hexopyranose + 2 S-adenosyl-L-methionine = dTDP-alpha-D-forosamine + 2 S-adenosyl-L-homocysteine + 2 H(+). Functionally, involved in the biosynthesis of forosamine ((4-dimethylamino)-2,3,4,6-tetradeoxy-alpha-D-threo-hexopyranose), a highly deoxygenated sugar component of several bioactive natural products such as the insecticidal spinosyns A and D. Catalyzes the dimethylation of the C-4 amino group from dTDP-4-amino-2,3,4,6-tetradeoxy-alpha-D-glucose to yield dTDP-D-forosamine. This chain is dTDP-4-amino-2,3,4,6-tetradeoxy-D-glucose N,N-dimethyltransferase, found in Saccharopolyspora spinosa.